A 206-amino-acid chain; its full sequence is Ribosomal RNA small subunit methyltransferase G (206 aa).

S-adenosyl-L-methionine-binding positions include glycine 71, phenylalanine 76, 122-123 (AE), and arginine 135.

Belongs to the methyltransferase superfamily. RNA methyltransferase RsmG family.

It is found in the cytoplasm. In terms of biological role, specifically methylates the N7 position of a guanine in 16S rRNA. The protein is Ribosomal RNA small subunit methyltransferase G of Bacteroides fragilis (strain ATCC 25285 / DSM 2151 / CCUG 4856 / JCM 11019 / LMG 10263 / NCTC 9343 / Onslow / VPI 2553 / EN-2).